We begin with the raw amino-acid sequence, 984 residues long: MYCBP-associated protein (984 aa).

2 disordered regions span residues 61–88 and 218–240; these read LEASENVKEKKRAKGPEQPTPTIQEEPE and GESKQKAPKEEKRPPWAPPPQHN. The span at 218-231 shows a compositional bias: basic and acidic residues; it reads GESKQKAPKEEKRP. A Phosphothreonine modification is found at Thr613. Ser619 carries the phosphoserine modification. Disordered regions lie at residues 693 to 729 and 842 to 917; these read SPISETQVPRPENEALRESGSQKARVGTKSPQRKSIM and PEEQ…ASQD. The segment covering 862-910 has biased composition (basic and acidic residues); it reads AGKEERKGAAQEKKQLGIKDKEDKKGAKLLGKEDRPNSKKHKAKDDKKV.

In terms of assembly, interacts with MYCBP. In terms of tissue distribution, expressed specifically in testis.

The protein localises to the cytoplasm. It localises to the membrane. Functionally, may play a role in spermatogenesis. May be involved in synaptic processes. The sequence is that of MYCBP-associated protein from Homo sapiens (Human).